The sequence spans 697 residues: Transmembrane protein 168 (697 aa).

3 helical membrane-spanning segments follow: residues 36–56 (LGYL…YVRW), 63–83 (LILV…ILYY), and 89–109 (AASL…LCFL). Asparagine 111 carries an N-linked (GlcNAc...) asparagine glycan. 7 helical membrane passes run 172 to 192 (MLVE…MLII), 199 to 219 (FLAI…SLET), 223 to 243 (PIAF…DIYF), 265 to 285 (LSVV…AFKL), 293 to 313 (FVIP…IIFL), 352 to 372 (FCLI…ILGA), and 380 to 400 (GIFL…HGLF). Asparagine 533 and asparagine 598 each carry an N-linked (GlcNAc...) asparagine glycan. A helical membrane pass occupies residues 646 to 666 (ITYPLVHLANWLCGLNLFWIC).

The protein belongs to the TMEM168 family.

It is found in the nucleus membrane. Its function is as follows. Plays a key role in maintaining the cardiac electrical stability by modulating cell surface expression of SCN5A. May play a role in the modulation of anxiety behavior by regulating GABAergic neuronal system in the nucleus accumbens. The chain is Transmembrane protein 168 from Homo sapiens (Human).